The sequence spans 227 residues: Transmembrane emp24 domain-containing protein 1 (227 aa).

An N-terminal signal peptide occupies residues 1 to 23; the sequence is MMAAGTALGLALWLLLPPVGVGG. Residues 24 to 194 are Extracellular-facing; the sequence is AGPPPIQDGE…LQEGNLERVN (171 aa). In terms of domain architecture, GOLD spans 43–125; the sequence is KQCFYQSAPA…EKLVFFELIF (83 aa). Residues 145–170 adopt a coiled-coil conformation; the sequence is EILEVKMEDIKESIETMRIRLERSIQ. Residues 195 to 215 form a helical membrane-spanning segment; that stretch reads FWSAVNVAVLLLVAVLQVCTL. Residues 216–227 lie on the Cytoplasmic side of the membrane; the sequence is KRFFQDKRPVPM. A COPII vesicle coat-binding motif is present at residues 218–219; it reads FF. The short motif at 218–227 is the COPI vesicle coat-binding element; sequence FFQDKRPVPM.

This sequence belongs to the EMP24/GP25L family. Homodimer in endoplasmic reticulum, endoplasmic reticulum-Golgi intermediate compartment and cis-Golgi network. Interacts with IL1RL1. Interacts with RNF26; this interaction is important to modulate innate immune signaling through the cGAS-STING pathway.

The protein localises to the cell membrane. The protein resides in the endoplasmic reticulum membrane. It localises to the golgi apparatus. It is found in the cis-Golgi network membrane. Its subcellular location is the endoplasmic reticulum-Golgi intermediate compartment membrane. Functionally, potential role in vesicular protein trafficking, mainly in the early secretory pathway. May act as a cargo receptor at the lumenal side for incorporation of secretory cargo molecules into transport vesicles and may be involved in vesicle coat formation at the cytoplasmic side. Plays a positive role in IL-33-mediated IL-8 and IL-6 production by interacting with interleukin-33 receptor IL1RL1. Plays also a role in the modulation of innate immune signaling through the cGAS-STING pathway by interacting with RNF26. The polypeptide is Transmembrane emp24 domain-containing protein 1 (TMED1) (Bos taurus (Bovine)).